A 353-amino-acid polypeptide reads, in one-letter code: Histidinol-phosphate aminotransferase (353 aa).

N6-(pyridoxal phosphate)lysine is present on Lys209.

The protein belongs to the class-II pyridoxal-phosphate-dependent aminotransferase family. Histidinol-phosphate aminotransferase subfamily. In terms of assembly, homodimer. Requires pyridoxal 5'-phosphate as cofactor.

It catalyses the reaction L-histidinol phosphate + 2-oxoglutarate = 3-(imidazol-4-yl)-2-oxopropyl phosphate + L-glutamate. The protein operates within amino-acid biosynthesis; L-histidine biosynthesis; L-histidine from 5-phospho-alpha-D-ribose 1-diphosphate: step 7/9. The sequence is that of Histidinol-phosphate aminotransferase from Buchnera aphidicola subsp. Cinara cedri (strain Cc).